A 576-amino-acid polypeptide reads, in one-letter code: Arginine--tRNA ligase (576 aa).

Residues 122-132 (PNVAKQMHVGH) carry the 'HIGH' region motif.

The protein belongs to the class-I aminoacyl-tRNA synthetase family. In terms of assembly, monomer.

It is found in the cytoplasm. It carries out the reaction tRNA(Arg) + L-arginine + ATP = L-arginyl-tRNA(Arg) + AMP + diphosphate. The polypeptide is Arginine--tRNA ligase (Yersinia pseudotuberculosis serotype O:3 (strain YPIII)).